The following is a 66-amino-acid chain: Large ribosomal subunit protein bL33c (66 aa).

It belongs to the bacterial ribosomal protein bL33 family.

It localises to the plastid. Its subcellular location is the chloroplast. This Cucumis sativus (Cucumber) protein is Large ribosomal subunit protein bL33c.